A 292-amino-acid chain; its full sequence is Tricin synthase 2 (292 aa).

Positions 21–46 (RTTPASRVSSTAMAAANGDASHGANG) are disordered. The span at 23–32 (TPASRVSSTA) shows a compositional bias: polar residues. S-adenosyl-L-methionine is bound by residues serine 108, glutamate 130, 132-133 (GV), serine 138, aspartate 156, and alanine 185. Aspartate 208 serves as a coordination point for a divalent metal cation. Aspartate 210 is a binding site for S-adenosyl-L-methionine. 2 residues coordinate a divalent metal cation: aspartate 234 and asparagine 235.

Belongs to the class I-like SAM-binding methyltransferase superfamily. Cation-dependent O-methyltransferase family. CCoAMT subfamily. Mg(2+) is required as a cofactor. Requires Mn(2+) as cofactor. Expressed in stems only.

It carries out the reaction tricetin + 2 S-adenosyl-L-methionine = 3',5'-di-O-methyltricetin + 2 S-adenosyl-L-homocysteine + 2 H(+). Its function is as follows. Catalyzes the stepwise methylation of tricetin to its 3'-mono- and 3',5'-dimethyl ethers. No 3',4',5'-trimethylated ester derivatives are produced. Can use caffeoyl CoA, 5-hydroxyferulic acid, luteolin, tricetin, quercetin, myrcetin and 7,8-dihydroxyflavone as substrates, but not naringenin, apigenin or kaempferol. The 2,3-double bond and the O-dihydroxyl group of the substrate are both required for catalytic activity of the enzyme. The protein is Tricin synthase 2 (ROMT-17) of Oryza sativa subsp. japonica (Rice).